An 869-amino-acid polypeptide reads, in one-letter code: H(+)/Cl(-) exchange transporter 6 (869 aa).

The Cytoplasmic portion of the chain corresponds to 1 to 80 (MAGCRGSLCC…KKGRRYEAVK (80 aa)). A run of 2 helical transmembrane segments spans residues 81-113 (WMVVFAIGVCTGLVGLFVDFFVRLFTQLKFGVV) and 128-150 (LSLLELLGFNLTFVFLASLLVLI). The Selectivity filter part_1 signature appears at 156–160 (GSGIP). Residue Ser157 coordinates chloride. Residues 159-166 (IPEVKCYL) constitute an intramembrane region (helical). Transmembrane regions (helical) follow at residues 176–194 (RLRTLLCKVLGVLFSVAGG) and 200–217 (EGPMIHSGSVVGAGLPQF). The short motif at 198-202 (EKEGP) is the Selectivity filter part_2 element. Intramembrane regions (helical) lie at residues 241–253 (FVSAGAAAGVAAA) and 257–265 (PIGGTLFSL). The next 3 helical transmembrane spans lie at 277 to 294 (TWKVLFCSMSATFTLNFF), 335 to 364 (GFFVVMGVIGGLLGATFNCLNKRLAKYRMR), and 371 to 392 (KLVRVLESLLVSLVTTVVVFVA). Asn410, Asn422, and Asn432 each carry an N-linked (GlcNAc...) asparagine glycan. 2 consecutive transmembrane segments (helical) span residues 462-481 (PVTLALFFVLYFLLACWTYG) and 487-511 (GLFVPSLLCGAAFGRLVANVLKSYI). Residues 487–491 (GLFVP) carry the Selectivity filter part_3 motif. Residue Phe489 coordinates chloride. Positions 519–533 (GTFALIGAAAFLGGV) form an intramembrane region, helical. The segment at residues 534-536 (VRM) is an intramembrane region (note=Loop between two helices). Residues 537–548 (TISLTVILIEST) constitute an intramembrane region (helical). Positions 549 to 552 (NEIT) form an intramembrane region, note=Loop between two helices. A helical transmembrane segment spans residues 553–571 (YGLPIMVTLMVAKWTGDFF). Topologically, residues 572–869 (NKGIYDIHVG…ARLRQHYQTI (298 aa)) are cytoplasmic. A chloride-binding site is contributed by Tyr576. The CBS 1 domain occupies 605–662 (MEPNLTYVYPHTRIQSLVSILRTTVHHAFPVVTENRGNEKEFMKGNQLISNNIKFKKS). 630 to 632 (HHA) provides a ligand contact to ATP. Residue Ser773 is modified to Phosphoserine. Residues 807–868 (MNPSPFTVSP…QARLRQHYQT (62 aa)) enclose the CBS 2 domain. Position 849-852 (849-852 (TRHN)) interacts with ATP.

Belongs to the chloride channel (TC 2.A.49) family. ClC-6/CLCN6 subfamily. N-glycosylated on several asparagine residues. Testis, ovary, small intestine, brain and skeletal muscle. Low level expression in aortic and coronary vascular smooth muscle cells, and aortic endothelial cells. Isoform 3 is only detected in kidney.

The protein localises to the late endosome membrane. It catalyses the reaction 2 chloride(in) + H(+)(out) = 2 chloride(out) + H(+)(in). In terms of biological role, voltage-gated channel mediating the exchange of chloride ions against protons. Functions as antiporter and contributes to the acidification of the late endosome lumen. The CLC channel family contains both chloride channels and proton-coupled anion transporters that exchange chloride or another anion for protons. The presence of conserved gating glutamate residues is typical for family members that function as antiporters. The sequence is that of H(+)/Cl(-) exchange transporter 6 from Homo sapiens (Human).